The following is a 452-amino-acid chain: Trigger factor (452 aa).

Positions 171–256 constitute a PPIase FKBP-type domain; it reads GDRVKVNFKG…ATAIETPEEK (86 aa).

It belongs to the FKBP-type PPIase family. Tig subfamily.

It is found in the cytoplasm. The enzyme catalyses [protein]-peptidylproline (omega=180) = [protein]-peptidylproline (omega=0). Its function is as follows. Involved in protein export. Acts as a chaperone by maintaining the newly synthesized protein in an open conformation. Functions as a peptidyl-prolyl cis-trans isomerase. In Bradyrhizobium sp. (strain BTAi1 / ATCC BAA-1182), this protein is Trigger factor.